The following is a 462-amino-acid chain: Chromosomal replication initiator protein DnaA (462 aa).

Residues 1 to 84 (MAVSLWQQCI…RFDIGSRPSA (84 aa)) form a domain I, interacts with DnaA modulators region. Residues 84 to 125 (AKKPSVPAPIAPTRVANTQTKATVGTTFNVQAEPMANANHRS) are domain II. Residues 126–342 (NINPSYQFDN…GALNRVIANA (217 aa)) form a domain III, AAA+ region region. 4 residues coordinate ATP: G170, G172, K173, and T174. The segment at 343–462 (NFTGRPITID…YANLIRTLSS (120 aa)) is domain IV, binds dsDNA.

It belongs to the DnaA family. In terms of assembly, oligomerizes as a right-handed, spiral filament on DNA at oriC.

The protein resides in the cytoplasm. In terms of biological role, plays an essential role in the initiation and regulation of chromosomal replication. ATP-DnaA binds to the origin of replication (oriC) to initiate formation of the DNA replication initiation complex once per cell cycle. Binds the DnaA box (a 9 base pair repeat at the origin) and separates the double-stranded (ds)DNA. Forms a right-handed helical filament on oriC DNA; dsDNA binds to the exterior of the filament while single-stranded (ss)DNA is stabiized in the filament's interior. The ATP-DnaA-oriC complex binds and stabilizes one strand of the AT-rich DNA unwinding element (DUE), permitting loading of DNA polymerase. After initiation quickly degrades to an ADP-DnaA complex that is not apt for DNA replication. Binds acidic phospholipids. This Shewanella baltica (strain OS195) protein is Chromosomal replication initiator protein DnaA.